The following is a 391-amino-acid chain: Inhibin beta B chain (391 aa).

Positions 1-25 are cleaved as a signal peptide; it reads MDGAARRGVLAALLACGLLLLGAAA. A propeptide spanning residues 26 to 276 is cleaved from the precursor; the sequence is TPTPPPAGSS…ADNKHRIRKR (251 aa). The disordered stretch occupies residues 27–47; the sequence is PTPPPAGSSPQDTCTSCGFRR. Asparagine 77 carries N-linked (GlcNAc...) asparagine glycosylation. 4 disulfide bridges follow: cysteine 280-cysteine 288, cysteine 287-cysteine 356, cysteine 316-cysteine 388, and cysteine 320-cysteine 390.

Belongs to the TGF-beta family. Dimeric, linked by one or more disulfide bonds. Inhibin A is a dimer of alpha and beta-A. Inhibin B is a dimer of alpha and beta-B. Activin A is a homodimer of beta-A. Activin B is a homodimer of beta-B. Activin AB is a dimer of beta-A and beta-B.

It is found in the secreted. Inhibins and activins inhibit and activate, respectively, the secretion of follitropin by the pituitary gland. Inhibins/activins are involved in regulating a number of diverse functions such as hypothalamic and pituitary hormone secretion, gonadal hormone secretion, germ cell development and maturation, erythroid differentiation, insulin secretion, nerve cell survival, embryonic axial development or bone growth, depending on their subunit composition. Inhibins appear to oppose the functions of activins. The polypeptide is Inhibin beta B chain (INHBB) (Gallus gallus (Chicken)).